Reading from the N-terminus, the 644-residue chain is Forkhead box protein O (644 aa).

Residues 39 to 75 (FEPQTRARSNTWPCPRPENFVEPPDELDSTKASNQQL) are disordered. The residue at position 49 (T49) is a Phosphothreonine; by PKB/AKT1. S80 carries the phosphoserine modification. The fork-head DNA-binding region spans 100 to 206 (WGNLSYADLI…ETSRYEKRRG (107 aa)). 5 disordered regions span residues 187–210 (KSVR…RAKK), 222–276 (GLND…SPIR), 329–386 (QQQQ…QTLQ), 412–435 (SPNS…DSLN), and 578–612 (QQHL…NSSL). At S195 the chain carries Phosphoserine; by PKB/AKT1. Composition is skewed to polar residues over residues 226-235 (ATPSPSSSVS) and 261-270 (RASSNASSCG). At S264 the chain carries Phosphoserine; by PKB/AKT1. Phosphoserine occurs at positions 267, 268, and 273. The segment covering 329-340 (QQQQQQQQQQQQ) has biased composition (low complexity). Residues 350–359 (SQPPPPPYQP) are compositionally biased toward pro residues. The segment covering 360-374 (PQLQQQQQQQPSYSL) has biased composition (low complexity). A compositionally biased stretch (polar residues) spans 412–421 (SPNSVTTTMS).

In terms of assembly, interacts with melt.

It is found in the cytoplasm. It localises to the nucleus. Functionally, transcription factor involved in the regulation of the insulin signaling pathway. Consistently activates both the downstream target Thor\d4EBP and the feedback control target InR. Involved in negative regulation of the cell cycle, modulating cell growth and proliferation. In response to cellular stresses, such as nutrient deprivation or increased levels of reactive oxygen species, foxo is activated and inhibits growth through the action of target genes such as Thor. Foxo activated in the adult fat body can regulate lifespan in adults; an insulin peptide itself may function as one secondary messenger of insulin-regulated aging. Also regulates Lip4, homolog of human acid lipases, thereby acting as a key modulator of lipid metabolism by insulin signaling and integrates insulin responses to glucose and lipid homeostasis. The polypeptide is Forkhead box protein O (Drosophila pseudoobscura pseudoobscura (Fruit fly)).